A 155-amino-acid chain; its full sequence is Small ribosomal subunit protein bS6 (155 aa).

Positions 94-155 (EKHEEGPSAM…RPRRPREDRV (62 aa)) are disordered.

The protein belongs to the bacterial ribosomal protein bS6 family.

Functionally, binds together with bS18 to 16S ribosomal RNA. The polypeptide is Small ribosomal subunit protein bS6 (Rhizobium leguminosarum bv. trifolii (strain WSM2304)).